Reading from the N-terminus, the 477-residue chain is Alanine--glyoxylate aminotransferase 2 homolog 2, mitochondrial (477 aa).

Residues 1 to 22 (MQRFAAKRSVQNISVSLWRRCI) constitute a mitochondrion transit peptide. Pyridoxal 5'-phosphate is bound by residues 165 to 166 (GT), Tyr-192, and 292 to 295 (DEVQ). Position 321 is an N6-(pyridoxal phosphate)lysine (Lys-321). Thr-350 serves as a coordination point for pyridoxal 5'-phosphate.

It belongs to the class-III pyridoxal-phosphate-dependent aminotransferase family. Homotetramer. Interacts with GRF3. Requires pyridoxal 5'-phosphate as cofactor.

It localises to the mitochondrion. It catalyses the reaction glyoxylate + L-alanine = glycine + pyruvate. The chain is Alanine--glyoxylate aminotransferase 2 homolog 2, mitochondrial (AGT3) from Arabidopsis thaliana (Mouse-ear cress).